The chain runs to 548 residues: 5-epi-aristolochene synthase 2 (548 aa).

Aspartate 301, aspartate 305, aspartate 444, threonine 448, and glutamate 452 together coordinate Mg(2+). The DDXXD motif motif lies at 301–305 (DDTFD).

It belongs to the terpene synthase family. In terms of assembly, monomer. Mg(2+) is required as a cofactor. In terms of tissue distribution, expressed in roots, but not in shoots.

The protein resides in the cytoplasm. The catalysed reaction is (2E,6E)-farnesyl diphosphate = (+)-5-epi-aristolochene + diphosphate. The protein operates within secondary metabolite biosynthesis; terpenoid biosynthesis. Functionally, catalyzes the cyclization of trans,trans-farnesyl diphosphate (FPP) to the bicyclic intermediate 5-epi-aristolochene, initial step in the conversion of FPP to the sesquiterpenoid antifungal phytoalexin capsidiol. Produces germacrene A as an enzyme-bound intermediate that is not released by the enzyme, but is further cyclized to produce the bicyclic 5-epi-aristolochene. This is 5-epi-aristolochene synthase 2 from Nicotiana attenuata (Coyote tobacco).